The following is a 613-amino-acid chain: Protein starmaker (613 aa).

The signal sequence occupies residues 1 to 20 (MLSRTVFVPLILAFVGVSIS). The interval 42–613 (FTVQFNVGTP…DGRKTSMPIS (572 aa)) is disordered. Composition is skewed to basic and acidic residues over residues 62 to 72 (DGKDSAEKNEA), 117 to 132 (SAEK…DKPD), 147 to 193 (DASH…KPEG), 206 to 284 (SAEK…KSDD), and 291 to 449 (DEQK…HSDS). Residues 450-465 (DSDSDSDSDSDSDSDS) are compositionally biased toward acidic residues. Composition is skewed to basic and acidic residues over residues 467-482 (SNSR…SSES), 509-521 (DKDS…KTDS), and 538-554 (DDSK…TAEK). The span at 555–573 (TDEDSHDVSDDDDDIDAHD) shows a compositional bias: acidic residues. A compositionally biased stretch (basic and acidic residues) spans 574–607 (DEAGVEHGTDEASKPHQEPDHHDDTTHGSDDGRK).

It localises to the secreted. Functionally, essential for the formation of otoliths in the inner ear of developing larvae and for the perception of gravity and acceleration. May be one of the organic components of the ortholiths. The chain is Protein starmaker (stm) from Danio rerio (Zebrafish).